Consider the following 864-residue polypeptide: Protein translocase subunit SecA (864 aa).

ATP is bound by residues glutamine 87, 105-109, and aspartate 512; that span reads GEGKT.

This sequence belongs to the SecA family. In terms of assembly, monomer and homodimer. Part of the essential Sec protein translocation apparatus which comprises SecA, SecYEG and auxiliary proteins SecDF-YajC and YidC.

The protein resides in the cell inner membrane. Its subcellular location is the cytoplasm. The catalysed reaction is ATP + H2O + cellular proteinSide 1 = ADP + phosphate + cellular proteinSide 2.. In terms of biological role, part of the Sec protein translocase complex. Interacts with the SecYEG preprotein conducting channel. Has a central role in coupling the hydrolysis of ATP to the transfer of proteins into and across the cell membrane, serving as an ATP-driven molecular motor driving the stepwise translocation of polypeptide chains across the membrane. The sequence is that of Protein translocase subunit SecA from Buchnera aphidicola subsp. Cinara cedri (strain Cc).